A 224-amino-acid polypeptide reads, in one-letter code: Mammalian ependymin-related protein 1 (224 aa).

The first 37 residues, 1–37 (MPGRAPLRTVPGALGAWLLGGLWAWTLCGLCSLGAVG), serve as a signal peptide directing secretion. Intrachain disulfides connect C42–C172, C88–C222, and C113–C210. N-linked (GlcNAc...) asparagine glycosylation is found at N130 and N182.

This sequence belongs to the ependymin family. Homodimer. Post-translationally, N-glycosylated; the glycan contains mannose-6-phosphate moieties. In terms of tissue distribution, ubiquitous. Detected in brain, heart, skeletal muscle, kidney, testis, ovary and prostate.

It localises to the lysosome lumen. It is found in the secreted. In terms of biological role, binds anionic lipids and gangliosides at acidic pH. The protein is Mammalian ependymin-related protein 1 (EPDR1) of Homo sapiens (Human).